We begin with the raw amino-acid sequence, 30 residues long: Bacteriocin SRCAM 37 (30 aa).

The protein belongs to the bacteriocin class IIA/YGNGV family.

The protein resides in the secreted. In terms of biological role, bacteriocin with antibacterial activity against C.jejuni. The sequence is that of Bacteriocin SRCAM 37 from Paenibacillus polymyxa (Bacillus polymyxa).